The following is a 328-amino-acid chain: Extracellular exo-alpha-(1-&gt;5)-L-arabinofuranosidase (328 aa).

Positions 1-43 (MCTREAVRMSREHDLPEIPSRRLLLKGAAAAGALTAVPGVAHA) form a signal peptide, tat-tyPE signal. Residue Asp60 is the Proton acceptor of the active site. The active-site Proton donor is Glu236.

Belongs to the glycosyl hydrolase 43 family. Predicted to be exported by the Tat system. The position of the signal peptide cleavage has been experimentally proven.

Its subcellular location is the secreted. It carries out the reaction Hydrolysis of terminal non-reducing alpha-L-arabinofuranoside residues in alpha-L-arabinosides.. It participates in glycan metabolism; L-arabinan degradation. Its function is as follows. Involved in the degradation of arabinan and is a key enzyme in the complete degradation of the plant cell wall. Catalyzes only the cleavage of terminal alpha-(1-&gt;5) arabinofuranosyl bonds of arabinan present in the arabinofuranosyl polysaccharides or oligosaccharides. It cannot act on other arabinose-containing polysaccharides and arabinoxylo-oligosaccharides. This chain is Extracellular exo-alpha-(1-&gt;5)-L-arabinofuranosidase, found in Streptomyces chartreusis.